Consider the following 122-residue polypeptide: Mth938 domain-containing protein (122 aa).

The MTH138-like domain stretch occupies residues 6-122; sequence IASLSWGQMK…RVGGVFHSTC (117 aa).

Belongs to the AAMDC family.

It localises to the cytoplasm. Functionally, may play a role in preadipocyte differentiation and adipogenesis. In Bos taurus (Bovine), this protein is Mth938 domain-containing protein (AAMDC).